A 100-amino-acid polypeptide reads, in one-letter code: Putative insulin-like peptide beta-type 6 (100 aa).

The signal sequence occupies residues 1-18; that stretch reads MHSIVALMLIGTILPIAA. 4 cysteine pairs are disulfide-bonded: Cys54-Cys83, Cys66-Cys96, Cys70-Cys97, and Cys82-Cys87.

This sequence belongs to the insulin family.

It is found in the secreted. In Caenorhabditis elegans, this protein is Putative insulin-like peptide beta-type 6 (ins-5).